A 177-amino-acid polypeptide reads, in one-letter code: Large ribosomal subunit protein uL6 (177 aa).

It belongs to the universal ribosomal protein uL6 family. In terms of assembly, part of the 50S ribosomal subunit.

Its function is as follows. This protein binds to the 23S rRNA, and is important in its secondary structure. It is located near the subunit interface in the base of the L7/L12 stalk, and near the tRNA binding site of the peptidyltransferase center. This chain is Large ribosomal subunit protein uL6, found in Rhizobium rhizogenes (strain K84 / ATCC BAA-868) (Agrobacterium radiobacter).